The following is a 145-amino-acid chain: Bacilliredoxin GK1781 (145 aa).

Belongs to the bacilliredoxin family.

This chain is Bacilliredoxin GK1781, found in Geobacillus kaustophilus (strain HTA426).